The following is a 495-amino-acid chain: GTPase Der (495 aa).

EngA-type G domains are found at residues Pro-3–Glu-166 and Ile-208–Thr-381. Residues Gly-9–Ser-16, Asp-56–Ile-60, Asn-118–Asp-121, Gly-214–Ser-221, Asp-261–Val-265, and Asn-326–Asp-329 each bind GTP. One can recognise a KH-like domain in the interval Arg-382–Glu-466.

The protein belongs to the TRAFAC class TrmE-Era-EngA-EngB-Septin-like GTPase superfamily. EngA (Der) GTPase family. As to quaternary structure, associates with the 50S ribosomal subunit.

Functionally, GTPase that plays an essential role in the late steps of ribosome biogenesis. The protein is GTPase Der of Pectobacterium atrosepticum (strain SCRI 1043 / ATCC BAA-672) (Erwinia carotovora subsp. atroseptica).